A 504-amino-acid chain; its full sequence is CaM kinase-like vesicle-associated protein (504 aa).

Residues 24–286 (YDLGQVVKTE…AEEAISHEWI (263 aa)) form the Protein kinase domain. The segment at 378–504 (KSDDMASADR…AQESQRVETS (127 aa)) is disordered. The residue at position 384 (Ser384) is a Phosphoserine. A compositionally biased stretch (polar residues) spans 390–431 (TPATDGSATPATDGSVTPATDGSITPATDGSVTPATDRSATP). Residues Thr438 and Thr462 each carry the phosphothreonine modification. Residues 445 to 470 (TVPAAQSSAAPAAKAAATPEPAVAQP) show a composition bias toward low complexity.

Belongs to the protein kinase superfamily. CAMK Ser/Thr protein kinase family. Interacts with calmodulin, in the presence of calcium. Requires Ca(2+) as cofactor. In terms of tissue distribution, expressed in brain and weakly in eye. Not detected in liver, kidney, spleen, thymus, bladder, aorta, lung, intestine, esophagus, stomach, skeletal muscle, heart, diaphragm, uterus, tail skin, submaxillary gland, prostate, ear, epididymis, placenta, pancreas, ovary, testis, adrenal gland, parathyroid gland, thyroid gland, pineal gland, pituitary and sciatic nerve. In adult hippocampus, predominantly expressed in caudate nucleus, cortex, hypothalamus, olfactory bulb, and midbrain and faintly in pons, brainstem and spinal cord.

The protein resides in the cell membrane. Its subcellular location is the cytoplasmic vesicle membrane. Has no detectable kinase activity in vitro. This is CaM kinase-like vesicle-associated protein (Camkv) from Rattus norvegicus (Rat).